A 294-amino-acid chain; its full sequence is S-adenosylmethionine uptake transporter (294 aa).

Helical transmembrane passes span 4-24 (ALKT…SSSA), 39-59 (FEVA…FVFY), 74-91 (ILRG…TYGL), 98-118 (TATV…VFFL), 121-141 (NIIW…VVTL), 148-168 (FNPE…LDII), 177-197 (SMIS…LPVA), 207-227 (FELA…FFLL), 237-257 (ATAP…YFIF), and 260-280 (FPDK…LFII). EamA domains follow at residues 21 to 141 (SSSA…VVTL) and 160 to 280 (ISFA…LFII).

This sequence belongs to the drug/metabolite transporter (DMT) superfamily. 10 TMS drug/metabolite exporter (DME) (TC 2.A.7.3) family.

It localises to the cell inner membrane. In terms of biological role, transports S-adenosylmethionine. The protein is S-adenosylmethionine uptake transporter (sam) of Rickettsia felis (strain ATCC VR-1525 / URRWXCal2) (Rickettsia azadi).